The following is a 738-amino-acid chain: Putative RNA-binding protein EEED8.10 (738 aa).

Positions 112-201 (RKIVVSNISA…QVMVVSAYVS (90 aa)) constitute an RRM domain. The disordered stretch occupies residues 211 to 237 (LSDDVGSREDTPLSRASSTQSLASGSE). A compositionally biased stretch (polar residues) spans 224–237 (SRASSTQSLASGSE). The F-box domain maps to 239 to 297 (SFNLGNVPDKILRRVISFLPIHETIRLERVNKKFMEESIKSWELVNKIALARETVFNKQ).

In Caenorhabditis elegans, this protein is Putative RNA-binding protein EEED8.10.